The chain runs to 121 residues: Large ribosomal subunit protein bL21c (121 aa).

This sequence belongs to the bacterial ribosomal protein bL21 family. As to quaternary structure, part of the 50S ribosomal subunit.

It is found in the plastid. It localises to the chloroplast. In terms of biological role, this protein binds to 23S rRNA. The chain is Large ribosomal subunit protein bL21c from Huperzia lucidula (Shining clubmoss).